The chain runs to 1128 residues: Nck-associated protein 1 (1128 aa).

Serine 2 carries the post-translational modification N-acetylserine. Residues 640–665 (AVNKKSKKQTGKKGEPEREKPGVESM) form a disordered region. Basic and acidic residues predominate over residues 651–665 (KKGEPEREKPGVESM). The chain crosses the membrane as a helical span at residues 995–1015 (IACLLMVFVAVSLPTLASNVM).

It belongs to the HEM-1/HEM-2 family. As to quaternary structure, component of the WAVE1 complex composed of ABI2, CYFIP1 or CYFIP2, BRK1, NCKAP1 and WASF1/WAVE1. Within the complex, a heterodimer containing NCKAP1 and CYFIP1 interacts with a heterotrimer formed by WAVE1, ABI2 and BRK1. Component of the WAVE2 complex composed of ABI1, CYFIP1/SRA1, NCKAP1/NAP1 and WASF2/WAVE2. CYFIP2 binds to activated RAC1 which causes the complex to dissociate, releasing activated WASF1. The complex can also be activated by NCK1. Associates preferentially with the first SH3 domain of NCK. Interacts with NYAP1, NYAP2 and MYO16. Interacts with TMEM132D. In terms of assembly, (Microbial infection) Interacts with human cytomegalovirus protein UL135. Expressed in all tissues examined except peripheral blood leukocytes, with highest expression in brain, heart, and skeletal muscle. Expressed in cells of various brain regions including Purkinje cells and dentate nucleus of the cerebellum, CA4 region and dentate gyrus of the hippocampus, and in frontal gray and white matter.

The protein resides in the cell membrane. The protein localises to the cell projection. Its subcellular location is the lamellipodium membrane. Part of the WAVE complex that regulates lamellipodia formation. The WAVE complex regulates actin filament reorganization via its interaction with the Arp2/3 complex. Actin remodeling activity is regulated by RAC1. As component of the WAVE1 complex, required for BDNF-NTRK2 endocytic trafficking and signaling from early endosomes. The chain is Nck-associated protein 1 (NCKAP1) from Homo sapiens (Human).